The following is a 58-amino-acid chain: Protein translocase subunit SecE (58 aa).

Residues Ile-36 to Val-56 form a helical membrane-spanning segment.

Belongs to the SecE/SEC61-gamma family. As to quaternary structure, component of the Sec protein translocase complex. Heterotrimer consisting of SecY (alpha), SecG (beta) and SecE (gamma) subunits. The heterotrimers can form oligomers, although 1 heterotrimer is thought to be able to translocate proteins. Interacts with the ribosome. May interact with SecDF, and other proteins may be involved.

Its subcellular location is the cell membrane. Functionally, essential subunit of the Sec protein translocation channel SecYEG. Clamps together the 2 halves of SecY. May contact the channel plug during translocation. This is Protein translocase subunit SecE from Halorubrum lacusprofundi (strain ATCC 49239 / DSM 5036 / JCM 8891 / ACAM 34).